Reading from the N-terminus, the 199-residue chain is MRLRRVTEARLPTLWGNFLIVGFEENFTGHNHIALIYGNITGSDPVLTRIHSECLTGDALFSSRCDCGFQLKTALHCITEEKRGILIYHRQEGRNIGLLNKIRAYALQDNGADTVEANQCLGFAPDERDFTICADILKLLRVKKIRILTNNPKKVEILNKSCINITERVPLIVGRNPENSRYLDTKASKLGHLFYSYHK.

49–53 provides a ligand contact to GTP; it reads RIHSE. Zn(2+)-binding residues include Cys54, Cys65, and Cys67. Residues Gln70, 92-94, and Thr114 contribute to the GTP site; that span reads EGR. Asp126 (proton acceptor) is an active-site residue. Arg128 serves as the catalytic Nucleophile. Residues Thr149 and Lys154 each contribute to the GTP site.

It belongs to the GTP cyclohydrolase II family. As to quaternary structure, homodimer. The cofactor is Zn(2+).

The enzyme catalyses GTP + 4 H2O = 2,5-diamino-6-hydroxy-4-(5-phosphoribosylamino)-pyrimidine + formate + 2 phosphate + 3 H(+). It participates in cofactor biosynthesis; riboflavin biosynthesis; 5-amino-6-(D-ribitylamino)uracil from GTP: step 1/4. Functionally, catalyzes the conversion of GTP to 2,5-diamino-6-ribosylamino-4(3H)-pyrimidinone 5'-phosphate (DARP), formate and pyrophosphate. The polypeptide is GTP cyclohydrolase-2 (Blochmanniella pennsylvanica (strain BPEN)).